The chain runs to 301 residues: MENLLSVKDLSKQQILDLLALAKAVKANPAEYSQALAGKSIVTIYEKPSLRTRVTFDIGIHKLGGHAVYLDAQNGAIGERETVKDFAANISRWADAIVARVVSHKTLEGLVEHGSVPVVNSLCDLYHPCQALADFLTISEHYEDVSKVKLAYVGEGNNVTHSLMLTGAILGAEVTAVCPRGSSPDAQIVKQAMALAEISGGKINVTDNLDDIVDYDVIYGDTWVSMGDDTPLAQVKEKYMPYQINKALLMRTGIKHVLHCQPAHRELEITSEVMDGEHSLIFDQAENRMHAQNAVLLTLLK.

Residues R100 and H127 to Q130 contribute to the carbamoyl phosphate site. Residues N158, D221, and S225–M226 each bind L-ornithine. Carbamoyl phosphate contacts are provided by C260 and R288.

This sequence belongs to the aspartate/ornithine carbamoyltransferase superfamily. OTCase family. In terms of assembly, the enzyme is present as a mixture of trimers and dodecamers, with the relative proportions of the two forms depending on the salt concentration. In addition, the trimeric fraction could reassociate into dodecamers when the salt concentration is increased. It appears that in vivo, the main fraction is in the dodecameric form.

It localises to the cytoplasm. The catalysed reaction is carbamoyl phosphate + L-ornithine = L-citrulline + phosphate + H(+). The protein operates within amino-acid biosynthesis; L-arginine biosynthesis; L-arginine from L-ornithine and carbamoyl phosphate: step 1/3. Inhibited by excess of arginine and by the bisubstrate delta-N-phosphonoacetyl-L-ornithine (PALO). Functionally, reversibly catalyzes the transfer of the carbamoyl group from carbamoyl phosphate (CP) to the N(epsilon) atom of ornithine (ORN) to produce L-citrulline, which is a substrate for argininosuccinate synthetase, the enzyme involved in the final step in arginine biosynthesis. The chain is Ornithine carbamoyltransferase from Moritella abyssi.